We begin with the raw amino-acid sequence, 59 residues long: MRCLPVFIILLLLIPSAASVAQPKTKDDVALASFYDNAKRTLQRHWAKSLCCPEDAWCC.

Residues 1–19 (MRCLPVFIILLLLIPSAAS) form the signal peptide. The propeptide occupies 20–47 (VAQPKTKDDVALASFYDNAKRTLQRHWA).

The protein belongs to the conotoxin T superfamily. In terms of processing, contains 2 disulfide bonds that can be either 'C1-C3, C2-C4' or 'C1-C4, C2-C3', since these disulfide connectivities have been observed for conotoxins with cysteine framework V (for examples, see AC P0DQQ7 and AC P81755). As to expression, expressed by the venom duct.

The protein resides in the secreted. The protein is Conotoxin Ts-03 of Conus tessulatus (Tessellate cone).